Reading from the N-terminus, the 267-residue chain is 5'-nucleotidase SurE (267 aa).

A divalent metal cation is bound by residues D9, D10, S41, and N95.

Belongs to the SurE nucleotidase family. The cofactor is a divalent metal cation.

It is found in the cytoplasm. It catalyses the reaction a ribonucleoside 5'-phosphate + H2O = a ribonucleoside + phosphate. Functionally, nucleotidase that shows phosphatase activity on nucleoside 5'-monophosphates. This Aeropyrum pernix (strain ATCC 700893 / DSM 11879 / JCM 9820 / NBRC 100138 / K1) protein is 5'-nucleotidase SurE.